The chain runs to 343 residues: L-threonine 3-dehydrogenase (343 aa).

Residue C38 coordinates Zn(2+). Active-site charge relay system residues include T40 and H43. Positions 63, 64, 93, 96, 99, and 107 each coordinate Zn(2+). Residues I175, D195, R200, 262–264 (LGI), and 286–287 (IY) each bind NAD(+).

It belongs to the zinc-containing alcohol dehydrogenase family. Homotetramer. Zn(2+) is required as a cofactor.

The protein resides in the cytoplasm. The catalysed reaction is L-threonine + NAD(+) = (2S)-2-amino-3-oxobutanoate + NADH + H(+). It participates in amino-acid degradation; L-threonine degradation via oxydo-reductase pathway; glycine from L-threonine: step 1/2. Catalyzes the NAD(+)-dependent oxidation of L-threonine to 2-amino-3-ketobutyrate. The sequence is that of L-threonine 3-dehydrogenase from Paraburkholderia xenovorans (strain LB400).